A 610-amino-acid polypeptide reads, in one-letter code: Elongation factor 4 (610 aa).

Positions 13–195 constitute a tr-type G domain; the sequence is SHIRNFSIVA…AIVNRLPAPK (183 aa). GTP is bound by residues 25–30 and 142–145; these read DHGKST and NKID.

The protein belongs to the TRAFAC class translation factor GTPase superfamily. Classic translation factor GTPase family. LepA subfamily.

The protein resides in the cell inner membrane. It carries out the reaction GTP + H2O = GDP + phosphate + H(+). In terms of biological role, required for accurate and efficient protein synthesis under certain stress conditions. May act as a fidelity factor of the translation reaction, by catalyzing a one-codon backward translocation of tRNAs on improperly translocated ribosomes. Back-translocation proceeds from a post-translocation (POST) complex to a pre-translocation (PRE) complex, thus giving elongation factor G a second chance to translocate the tRNAs correctly. Binds to ribosomes in a GTP-dependent manner. The sequence is that of Elongation factor 4 from Rhizobium leguminosarum bv. trifolii (strain WSM2304).